Consider the following 94-residue polypeptide: Large ribosomal subunit protein bL28 (94 aa).

It belongs to the bacterial ribosomal protein bL28 family.

The protein is Large ribosomal subunit protein bL28 of Novosphingobium aromaticivorans (strain ATCC 700278 / DSM 12444 / CCUG 56034 / CIP 105152 / NBRC 16084 / F199).